Here is a 372-residue protein sequence, read N- to C-terminus: DSC E3 ubiquitin ligase complex subunit 2 (372 aa).

5 helical membrane passes run 26-46 (VVAG…LHLL), 54-74 (ILLW…LFII), 95-115 (YMFI…SLLF), 126-146 (TFLI…TVFV), and 160-180 (VIPM…NAFL). Residues 246–314 (TENENQVENP…LPTGPASQLY (69 aa)) form a disordered region. Polar residues predominate over residues 249-268 (ENQVENPVSNADANDSPTRQ). S264 carries the phosphoserine modification. T266 bears the Phosphothreonine mark. The segment covering 269 to 284 (NARATAIASSSNTAAS) has biased composition (low complexity). Over residues 286–305 (RNRQQISHPPLGRTSSSSVL) the composition is skewed to polar residues. The 37-residue stretch at 332–368 (EDINTVQTIMQTSRAQAIQALSQTNDVQRAVELLLEQ) folds into the UBA domain.

In terms of assembly, component of the DSC E3 ubiquitin ligase complex composed of dsc1, dsc2, dsc3 and dsc4.

The protein resides in the golgi apparatus membrane. The enzyme catalyses S-ubiquitinyl-[E2 ubiquitin-conjugating enzyme]-L-cysteine + [acceptor protein]-L-lysine = [E2 ubiquitin-conjugating enzyme]-L-cysteine + N(6)-ubiquitinyl-[acceptor protein]-L-lysine.. It functions in the pathway protein modification; protein ubiquitination. Functionally, component of the DSC E3 ubiquitin ligase complex which is required for the sre1 transcriptional activator proteolytic cleavage to release the soluble transcription factor from the membrane in low oxygen or sterol conditions. The complex also plays an important role in the multivesicular body (MVB) pathway and functions in a post-endoplasmic reticulum pathway for protein degradation. This chain is DSC E3 ubiquitin ligase complex subunit 2 (dsc2), found in Schizosaccharomyces pombe (strain 972 / ATCC 24843) (Fission yeast).